The following is a 492-amino-acid chain: Glutamate--cysteine ligase A, chloroplastic (492 aa).

Cys-156 and Cys-376 are disulfide-bonded.

This sequence belongs to the carboxylate-amine ligase family. Glutamate--cysteine ligase type 2 subfamily. In terms of assembly, homodimer or monomer when oxidized or reduced, respectively. The Cys-156-Cys-376 disulfide bridge is known to modulate the enzyme activity according to the redox status. The oxidized form constitutes the active enzyme.

The protein localises to the plastid. Its subcellular location is the chloroplast. It carries out the reaction L-cysteine + L-glutamate + ATP = gamma-L-glutamyl-L-cysteine + ADP + phosphate + H(+). Its pathway is sulfur metabolism; glutathione biosynthesis; glutathione from L-cysteine and L-glutamate: step 1/2. In Oryza sativa subsp. indica (Rice), this protein is Glutamate--cysteine ligase A, chloroplastic (GSH1-1).